A 483-amino-acid chain; its full sequence is Regulatory protein ViaA (483 aa).

Belongs to the ViaA family. As to quaternary structure, homodimer. Interacts with RavA.

The protein resides in the cytoplasm. Functionally, component of the RavA-ViaA chaperone complex, which may act on the membrane to optimize the function of some of the respiratory chains. ViaA stimulates the ATPase activity of RavA. This chain is Regulatory protein ViaA, found in Escherichia coli O17:K52:H18 (strain UMN026 / ExPEC).